The following is a 145-amino-acid chain: 3-dehydroquinate dehydratase (145 aa).

The active-site Proton acceptor is the Tyr-22. Substrate contacts are provided by Asn-71, His-77, and Asp-84. His-97 acts as the Proton donor in catalysis. Residues 98–99 (IS) and Arg-108 each bind substrate.

This sequence belongs to the type-II 3-dehydroquinase family. As to quaternary structure, homododecamer.

It catalyses the reaction 3-dehydroquinate = 3-dehydroshikimate + H2O. The protein operates within metabolic intermediate biosynthesis; chorismate biosynthesis; chorismate from D-erythrose 4-phosphate and phosphoenolpyruvate: step 3/7. Its function is as follows. Catalyzes a trans-dehydration via an enolate intermediate. This chain is 3-dehydroquinate dehydratase, found in Exiguobacterium sp. (strain ATCC BAA-1283 / AT1b).